We begin with the raw amino-acid sequence, 223 residues long: Glucosyl-3-phosphoglycerate phosphatase (223 aa).

Residue arginine 10 coordinates substrate. Histidine 11 (tele-phosphohistidine intermediate) is an active-site residue. Residue lysine 47 forms an Isoglutamyl lysine isopeptide (Lys-Gln) (interchain with Q-Cter in protein Pup) linkage. Arginine 60 is a substrate binding site. The active-site Proton donor/acceptor is glutamate 84. Histidine 159 lines the substrate pocket.

Belongs to the phosphoglycerate mutase family. In terms of assembly, homodimer. Dimerization of the enzyme is essential for its dephosphorylation activity.

It carries out the reaction (2R)-2-O-(alpha-D-glucopyranosyl)-3-phospho-glycerate + H2O = (2R)-2-O-(alpha-D-glucopyranosyl)-glycerate + phosphate. The catalysed reaction is 2-O-(alpha-D-mannosyl)-3-phosphoglycerate + H2O = (2R)-2-O-(alpha-D-mannosyl)-glycerate + phosphate. It catalyses the reaction (2R)-2-O-[alpha-D-mannopyranosyl-(1-&gt;2)-alpha-D-glucopyranosyl]-3-phospho-glycerate + H2O = (2R)-2-O-[alpha-D-mannopyranosyl-(1-&gt;2)-alpha-D-glucopyranosyl]-glycerate + phosphate. Progressively inhibited by cobalt ions at concentrations between 10-50 mM and by copper ions at any concentration between 1-50 mM. In terms of biological role, involved in the biosynthesis of mycobacterial methylglucose lipopolysaccharides (MGLPs). Catalyzes the dephosphorylation of glucosyl-3-phosphoglycerate (GPG) to glucosylglycerate (GG). GPG is the preferred substrate, but GpgP also exhibits low dephosphorylation activity on mannosyl-3-phosphoglycerate (MPG) and mannosylglucosyl-3-phosphoglycerate (MGPG) in vitro. Shows only trace of phosphoglycerate mutase (PGM) activity. This Mycobacterium tuberculosis (strain ATCC 25618 / H37Rv) protein is Glucosyl-3-phosphoglycerate phosphatase.